We begin with the raw amino-acid sequence, 187 residues long: Putative carbonic anhydrase YtiB (187 aa).

The Zn(2+) site is built by Cys-38, Asp-40, His-96, and Cys-99.

This sequence belongs to the beta-class carbonic anhydrase family. It depends on Zn(2+) as a cofactor.

It catalyses the reaction hydrogencarbonate + H(+) = CO2 + H2O. In terms of biological role, reversible hydration of carbon dioxide. This Bacillus subtilis (strain 168) protein is Putative carbonic anhydrase YtiB (ytiB).